The following is a 229-amino-acid chain: Trypsin (229 aa).

The propeptide at 1–7 (APDDDDK) is activation peptide. The region spanning 8–227 (IVGGYECPKH…YVSWIHETIA (220 aa)) is the Peptidase S1 domain. 6 disulfide bridges follow: Cys14–Cys143, Cys32–Cys48, Cys116–Cys216, Cys123–Cys189, Cys154–Cys168, and Cys179–Cys203. His47 serves as the catalytic Charge relay system. The Ca(2+) site is built by Glu59 and Glu69. Residue Asp91 is the Charge relay system of the active site. Ser183 (charge relay system) is an active-site residue.

It belongs to the peptidase S1 family. Ca(2+) serves as cofactor.

The protein resides in the secreted. The protein localises to the extracellular space. It carries out the reaction Preferential cleavage: Arg-|-Xaa, Lys-|-Xaa.. The sequence is that of Trypsin from Squalus acanthias (Spiny dogfish).